The following is a 123-amino-acid chain: Large ribosomal subunit protein bL12 (123 aa).

The protein belongs to the bacterial ribosomal protein bL12 family. As to quaternary structure, homodimer. Part of the ribosomal stalk of the 50S ribosomal subunit. Forms a multimeric L10(L12)X complex, where L10 forms an elongated spine to which 2 to 4 L12 dimers bind in a sequential fashion. Binds GTP-bound translation factors.

Its function is as follows. Forms part of the ribosomal stalk which helps the ribosome interact with GTP-bound translation factors. Is thus essential for accurate translation. The polypeptide is Large ribosomal subunit protein bL12 (Mycoplasmopsis synoviae (strain 53) (Mycoplasma synoviae)).